The following is a 529-amino-acid chain: MDLPVGPGAAGPSNVPAFLTKLWTLVSDPDTDALICWSPSGNSFHVFDQGQFAKEVLPKYFKHNNMASFVRQLNMYGFRKVVHIEQGGLVKPERDDTEFQHPCFLRGQEQLLENIKRKVTSVSTLKSEDIKIRQDSVTKLLTDVQLMKGKQECMDSKLLAMKHENEALWREVASLRQKHAQQQKVVNKLIQFLISLVQSNRILGVKRKIPLMLNDSGSAHSMPKYSRQFSLEHVHGSGPYSAPSPAYSSSSLYAPDAVASSGPIISDITELAPASPMASPGGSIDERPLSSSPLVRVKEEPPSPPQSPRVEEASPGRPSSVDTLLSPTALIDSILRESEPAPASVTALTDARGHTDTEGRPPSPPPTSTPEKCLSVACLDKNELSDHLDAMDSNLDNLQTMLSSHGFSVDTSALLDLFSPSVTVPDMSLPDLDSSLASIQELLSPQEPPRPPEAENSSPDSGKQLVHYTAQPLFLLDPGSVDTGSNDLPVLFELGEGSYFSEGDGFAEDPTISLLTGSEPPKAKDPTVS.

Methionine 1 carries the N-acetylmethionine modification. The segment at 15–120 (VPAFLTKLWT…LLENIKRKVT (106 aa)) is DNA-binding domain. N6-acetyllysine is present on lysine 80. Position 91 is an N6-acetyllysine; alternate (lysine 91). A Glycyl lysine isopeptide (Lys-Gly) (interchain with G-Cter in SUMO2); alternate cross-link involves residue lysine 91. Lysine 118 carries the post-translational modification N6-acetyllysine. The residue at position 121 (serine 121) is a Phosphoserine; by MAPKAPK2. Residues lysine 126 and lysine 131 each participate in a glycyl lysine isopeptide (Lys-Gly) (interchain with G-Cter in SUMO2) cross-link. Positions 130–203 (IKIRQDSVTK…ISLVQSNRIL (74 aa)) are hydrophobic repeat HR-A/B. Position 142 is a phosphothreonine; by CK2 (threonine 142). Lysine 150 and lysine 188 each carry N6-acetyllysine. A d domain region spans residues 203–224 (LGVKRKIPLMLNDSGSAHSMPK). The residue at position 208 (lysine 208) is an N6-acetyllysine; alternate. Lysine 208 participates in a covalent cross-link: Glycyl lysine isopeptide (Lys-Gly) (interchain with G-Cter in SUMO2); alternate. The residue at position 216 (serine 216) is a Phosphoserine; by PLK1. A regulatory domain region spans residues 221 to 310 (SMPKYSRQFS…PPSPPQSPRV (90 aa)). A Glycyl lysine isopeptide (Lys-Gly) (interchain with G-Cter in SUMO2) cross-link involves residue lysine 224. Residue serine 230 is modified to Phosphoserine; by CAMK2A. 2 positions are modified to phosphoserine: serine 275 and serine 292. The tract at residues 295-324 (VRVKEEPPSPPQSPRVEEASPGRPSSVDTL) is disordered. At lysine 298 the chain carries N6-acetyllysine; alternate. Residue lysine 298 forms a Glycyl lysine isopeptide (Lys-Gly) (interchain with G-Cter in SUMO2); alternate linkage. Residue lysine 298 forms a Glycyl lysine isopeptide (Lys-Gly) (interchain with G-Cter in SUMO); alternate linkage. Serine 303 is modified (phosphoserine; by GSK3-beta). Phosphoserine; by MAPK3 is present on serine 307. Residues serine 314 and serine 319 each carry the phosphoserine modification. Serine 320 bears the Phosphoserine; by PKA mark. Residue threonine 323 is modified to Phosphothreonine. Phosphoserine; by MAPK12 is present on serine 326. A disordered region spans residues 336–372 (RESEPAPASVTALTDARGHTDTEGRPPSPPPTSTPEK). Serine 344 bears the Phosphoserine mark. Serine 363 bears the Phosphoserine; by MAPK8 mark. The segment at 371 to 529 (EKCLSVACLD…PPKAKDPTVS (159 aa)) is transactivation domain. The tract at residues 384–409 (LSDHLDAMDSNLDNLQTMLSSHGFSV) is hydrophobic repeat HR-C. Residues 412-420 (SALLDLFSP) carry the 9aaTAD motif. Serine 419 is modified (phosphoserine; by PLK1). Serine 444 is subject to Phosphoserine. Disordered regions lie at residues 444-463 (SPQE…DSGK) and 502-529 (EGDG…PTVS). Position 524 is an N6-acetyllysine (lysine 524).

The protein belongs to the HSF family. As to quaternary structure, monomer; cytoplasmic latent and transcriptionally inactive monomeric form in unstressed cells. Homotrimer; in response to stress, such as heat shock, homotrimerizes and translocates into the nucleus, binds to heat shock element (HSE) sequences in promoter of heat shock protein (HSP) genes and acquires transcriptional ability. Interacts (via monomeric form) with FKBP4; this interaction occurs in unstressed cells. Associates (via monomeric form) with HSP90 proteins in a multichaperone complex in unnstressed cell; this association maintains HSF1 in a non-DNA-binding and transcriptional inactive form by preventing HSF1 homotrimerization. Homotrimeric transactivation activity is modulated by protein-protein interactions and post-translational modifications. Interacts with HSP90AA1; this interaction is decreased in a IER5-dependent manner, promoting HSF1 accumulation in the nucleus, homotrimerization and DNA-binding activities. Part (via regulatory domain in the homotrimeric form) of a large heat shock-induced HSP90-dependent multichaperone complex at least composed of FKBP4, FKBP5, HSP90 proteins, PPID, PPP5C and PTGES3; this association maintains the HSF1 homotrimeric DNA-bound form in a transcriptionally inactive form. Interacts with BAG3 (via BAG domain); this interaction occurs in normal and heat-shocked cells promoting nuclear shuttling of HSF1 in a BAG3-dependent manner. Interacts (via homotrimeric and hyperphosphorylated form) with FKBP4; this interaction occurs upon heat shock in a HSP90-dependent multichaperone complex. Interacts (via homotrimeric form preferentially) with EEF1A proteins. In heat shocked cells, stress-denatured proteins compete with HSF1 homotrimeric DNA-bound form for association of the HSP90-dependent multichaperone complex, and hence alleviating repression of HSF1-mediated transcriptional activity. Interacts (via homotrimeric form preferentially) with DAXX; this interaction relieves homotrimeric HSF1 from repression of its transcriptional activity by HSP90-dependent multichaperone complex upon heat shock. Interacts (via D domain and preferentially with hyperphosphorylated form) with JNK1; this interaction occurs under both normal growth conditions and immediately upon heat shock. Interacts (via D domain and preferentially with hyperphosphorylated form) with MAPK3; this interaction occurs upon heat shock. Interacts with IER5 (via central region); this interaction promotes PPP2CA-induced dephosphorylation on Ser-121, Ser-307, Ser-314, Thr-323 and Thr-367 and HSF1 transactivation activity. Found in a ribonucleoprotein complex composed of the HSF1 homotrimeric form, translation elongation factor eEF1A proteins and non-coding RNA heat shock RNA-1 (HSR1); this complex occurs upon heat shock and stimulates HSF1 DNA-binding activity. Interacts (via transactivation domain) with HSPA1A/HSP70 and DNAJB1; these interactions result in the inhibition of heat shock- and HSF1-induced transcriptional activity during the attenuation and recovery phase from heat shock. Interacts (via Ser-303 and Ser-307 phosphorylated form) with YWHAE; this interaction promotes HSF1 sequestration in the cytoplasm in an ERK-dependent manner. Found in a complex with IER5 and PPP2CA. Interacts with TPR; this interaction increases upon heat shock and stimulates export of HSP70 mRNA. Interacts with SYMPK (via N-terminus) and CSTF2; these interactions occur upon heat shock. Interacts (via transactivation domain) with HSPA8. Interacts with EEF1D; this interaction occurs at heat shock promoter element (HSE) sequences. Interacts with MAPKAPK2. Interacts with PRKACA/PKA. Interacts (via transactivation domain) with GTF2A2. Interacts (via transactivation domain) with GTF2B. Interacts (via transactivation domain) with TBP. Interacts with CDK9, CCNT1 and EP300. Interacts (via N-terminus) with XRCC5 (via N-terminus) and XRCC6 (via N-terminus); these interactions are direct and prevent XRCC5/XRCC6 heterodimeric binding and non-homologous end joining (NHEJ) repair activities induced by ionizing radiation (IR). Interacts with PLK1; this interaction occurs during the early mitotic period, increases upon heat shock but does not modulate neither HSF1 homotrimerization and DNA-binding activities. Interacts (via Ser-216 phosphorylated form) with CDC20; this interaction occurs in mitosis in a MAD2L1-dependent manner and prevents PLK1-stimulated degradation of HSF1 by blocking the recruitment of the SCF(BTRC) ubiquitin ligase complex. Interacts with MAD2L1; this interaction occurs in mitosis. Interacts with BTRC; this interaction occurs during mitosis, induces its ubiquitin-dependent degradation following stimulus-dependent phosphorylation at Ser-216, a process inhibited by CDC20. Interacts with HSP90AA1 and HSP90AB1. Forms a complex with TTC5/STRAP and p300/EP300; these interactions augment chromatin-bound HSF1 and p300/EP300 histone acetyltransferase activity. Post-translationally, phosphorylated. Phosphorylated in unstressed cells; this phosphorylation is constitutive and implicated in the repression of HSF1 transcriptional activity. Phosphorylated on Ser-121 by MAPKAPK2; this phosphorylation promotes interaction with HSP90 proteins and inhibits HSF1 homotrimerization, DNA-binding and transactivation activities. Phosphorylation on Ser-303 by GSK3B/GSK3-beta and on Ser-307 by MAPK3 within the regulatory domain is involved in the repression of HSF1 transcriptional activity and occurs in a RAF1-dependent manner. Phosphorylation on Ser-303 and Ser-307 increases HSF1 nuclear export in a YWHAE- and XPO1/CRM1-dependent manner. Phosphorylation on Ser-307 is a prerequisite for phosphorylation on Ser-303. According to PubMed:9535852, Ser-303 is not phosphorylated in unstressed cells. Phosphorylated on Ser-419 by PLK1; phosphorylation promotes nuclear translocation upon heat shock. Hyperphosphorylated upon heat shock and during the attenuation and recovery phase period of the heat shock response. Phosphorylated on Thr-142; this phosphorylation increases HSF1 transactivation activity upon heat shock. Phosphorylation on Ser-230 by CAMK2A; this phosphorylation enhances HSF1 transactivation activity upon heat shock. Phosphorylation on Ser-326 by MAPK12; this phosphorylation enhances HSF1 nuclear translocation, homotrimerization and transactivation activities upon heat shock. Phosphorylated on Ser-320 by PRKACA/PKA; this phosphorylation promotes nuclear localization and transcriptional activity upon heat shock. Phosphorylated on Ser-363 by MAPK8; this phosphorylation occurs upon heat shock, induces HSF1 translocation into nuclear stress bodies and negatively regulates transactivation activity. Neither basal nor stress-inducible phosphorylation on Ser-230, Ser-292, Ser-303, Ser-307, Ser-314, Ser-319, Ser-320, Thr-323, Ser-326, Ser-338, Ser-344, Ser-363, Thr-367, Ser-368 and Thr-369 within the regulatory domain is involved in the regulation of HSF1 subcellular localization or DNA-binding activity; however, it negatively regulates HSF1 transactivation activity. Phosphorylated on Ser-216 by PLK1 in the early mitotic period; this phosphorylation regulates HSF1 localization to the spindle pole, the recruitment of the SCF(BTRC) ubiquitin ligase complex inducing HSF1 degradation, and hence mitotic progression. Dephosphorylated on Ser-121, Ser-307, Ser-314, Thr-323 and Thr-367 by phosphatase PPP2CA in an IER5-dependent manner, leading to HSF1-mediated transactivation activity. Sumoylated with SUMO1 and SUMO2 upon heat shock in a ERK2-dependent manner. Sumoylated by SUMO1 on Lys-298; sumoylation occurs upon heat shock and promotes its localization to nuclear stress bodies and DNA-binding activity. Phosphorylation on Ser-303 and Ser-307 is probably a prerequisite for sumoylation. In terms of processing, acetylated on Lys-118; this acetylation is decreased in a IER5-dependent manner. Acetylated on Lys-118, Lys-208 and Lys-298; these acetylations occur in a EP300-dependent manner. Acetylated on Lys-80; this acetylation inhibits DNA-binding activity upon heat shock. Deacetylated on Lys-80 by SIRT1; this deacetylation increases DNA-binding activity. Post-translationally, ubiquitinated by SCF(BTRC) and degraded following stimulus-dependent phosphorylation at Ser-216 by PLK1 in mitosis. Polyubiquitinated. Undergoes proteasomal degradation upon heat shock and during the attenuation and recovery phase period of the heat shock response.

It is found in the nucleus. The protein resides in the cytoplasm. Its subcellular location is the nucleoplasm. It localises to the perinuclear region. The protein localises to the cytoskeleton. It is found in the spindle pole. The protein resides in the microtubule organizing center. Its subcellular location is the centrosome. It localises to the chromosome. The protein localises to the centromere. It is found in the kinetochore. Functions as a stress-inducible and DNA-binding transcription factor that plays a central role in the transcriptional activation of the heat shock response (HSR), leading to the expression of a large class of molecular chaperones, heat shock proteins (HSPs), that protect cells from cellular insult damage. In unstressed cells, is present in a HSP90-containing multichaperone complex that maintains it in a non-DNA-binding inactivated monomeric form. Upon exposure to heat and other stress stimuli, undergoes homotrimerization and activates HSP gene transcription through binding to site-specific heat shock elements (HSEs) present in the promoter regions of HSP genes. Upon heat shock stress, forms a chromatin-associated complex with TTC5/STRAP and p300/EP300 to stimulate HSR transcription, therefore increasing cell survival. Activation is reversible, and during the attenuation and recovery phase period of the HSR, returns to its unactivated form. Binds to inverted 5'-NGAAN-3' pentamer DNA sequences. Binds to chromatin at heat shock gene promoters. Activates transcription of transcription factor FOXR1 which in turn activates transcription of the heat shock chaperones HSPA1A and HSPA6 and the antioxidant NADPH-dependent reductase DHRS2. Also serves several other functions independently of its transcriptional activity. Involved in the repression of Ras-induced transcriptional activation of the c-fos gene in heat-stressed cells. Positively regulates pre-mRNA 3'-end processing and polyadenylation of HSP70 mRNA upon heat-stressed cells in a symplekin (SYMPK)-dependent manner. Plays a role in nuclear export of stress-induced HSP70 mRNA. Plays a role in the regulation of mitotic progression. Also plays a role as a negative regulator of non-homologous end joining (NHEJ) repair activity in a DNA damage-dependent manner. Involved in stress-induced cancer cell proliferation in a IER5-dependent manner. Its function is as follows. (Microbial infection) Plays a role in latent human immunodeficiency virus (HIV-1) transcriptional reactivation. Binds to the HIV-1 long terminal repeat promoter (LTR) to reactivate viral transcription by recruiting cellular transcriptional elongation factors, such as CDK9, CCNT1 and EP300. The protein is Heat shock factor protein 1 of Homo sapiens (Human).